Here is a 351-residue protein sequence, read N- to C-terminus: Protein-glutamate methylesterase/protein-glutamine glutaminase (351 aa).

The Response regulatory domain maps to 8-125 (TVVVVDDSLT…GEDPFAGLGD (118 aa)). 4-aspartylphosphate is present on Asp59. The CheB-type methylesterase domain occupies 151 to 345 (PKIGTVVGIG…PAILNLCERR (195 aa)). Active-site residues include Ser162, His188, and Asp287.

This sequence belongs to the CheB family. Phosphorylated by CheA. Phosphorylation of the N-terminal regulatory domain activates the methylesterase activity.

It is found in the cytoplasm. The catalysed reaction is [protein]-L-glutamate 5-O-methyl ester + H2O = L-glutamyl-[protein] + methanol + H(+). It carries out the reaction L-glutaminyl-[protein] + H2O = L-glutamyl-[protein] + NH4(+). Functionally, involved in chemotaxis. Part of a chemotaxis signal transduction system that modulates chemotaxis in response to various stimuli. Catalyzes the demethylation of specific methylglutamate residues introduced into the chemoreceptors (methyl-accepting chemotaxis proteins or MCP) by CheR. Also mediates the irreversible deamidation of specific glutamine residues to glutamic acid. The polypeptide is Protein-glutamate methylesterase/protein-glutamine glutaminase (Gluconobacter oxydans (strain 621H) (Gluconobacter suboxydans)).